The following is a 178-amino-acid chain: MGILKAASSKKNLRPCVIGIDPGLANTGYGIISFSNNRFECIEYGSISTEPHLLQGERLLKIFDKVSELIEKYRPKEAGIETLYFAKNATSAMSVSEARGVVLLALAQGGVRVGEYAPNSIKKAVTGIAQAEKRQVQEAVKLILGLKEIPRPDHAADALAAAITKINLGDVGEVRAYV.

Catalysis depends on residues Asp21, Glu81, and His154. 3 residues coordinate Mg(2+): Asp21, Glu81, and His154.

The protein belongs to the RuvC family. As to quaternary structure, homodimer which binds Holliday junction (HJ) DNA. The HJ becomes 2-fold symmetrical on binding to RuvC with unstacked arms; it has a different conformation from HJ DNA in complex with RuvA. In the full resolvosome a probable DNA-RuvA(4)-RuvB(12)-RuvC(2) complex forms which resolves the HJ. It depends on Mg(2+) as a cofactor.

It localises to the cytoplasm. The enzyme catalyses Endonucleolytic cleavage at a junction such as a reciprocal single-stranded crossover between two homologous DNA duplexes (Holliday junction).. The RuvA-RuvB-RuvC complex processes Holliday junction (HJ) DNA during genetic recombination and DNA repair. Endonuclease that resolves HJ intermediates. Cleaves cruciform DNA by making single-stranded nicks across the HJ at symmetrical positions within the homologous arms, yielding a 5'-phosphate and a 3'-hydroxyl group; requires a central core of homology in the junction. The consensus cleavage sequence is 5'-(A/T)TT(C/G)-3'. Cleavage occurs on the 3'-side of the TT dinucleotide at the point of strand exchange. HJ branch migration catalyzed by RuvA-RuvB allows RuvC to scan DNA until it finds its consensus sequence, where it cleaves and resolves the cruciform DNA. The polypeptide is Crossover junction endodeoxyribonuclease RuvC (Treponema denticola (strain ATCC 35405 / DSM 14222 / CIP 103919 / JCM 8153 / KCTC 15104)).